A 262-amino-acid polypeptide reads, in one-letter code: MRQMWNGWLLALQLFTVIPIRRSIEWNDIHVRWLVRSMPLAGAAIGALAAGTYALCSMFSFGTPLFLALFLLWLGIWLAGGLHADGWMDVSDAFFSYRDAKRRQQIMSDSRVGAFAVLSLACLLSFRWLFLYETIKAEIPPALFVAIPLLSRSGAAWLLSVGKLAKSTGMAASVREYISWRDAVWALVLAFLALSLLLVFGGVPVWTSAALAVAMALLALGAKPWVEKQFGGVTGDVLGALIEGGETLLWGVVWLLHSSAMG.

7 helical membrane-spanning segments follow: residues 37–57, 58–78, 112–132, 139–159, 183–203, 205–225, and 237–257; these read SMPL…ALCS, MFSF…GIWL, VGAF…LFLY, IPPA…AWLL, AVWA…FGGV, VWTS…AKPW, and VLGA…WLLH.

It belongs to the CobS family. Mg(2+) serves as cofactor.

It localises to the cell membrane. It catalyses the reaction alpha-ribazole + adenosylcob(III)inamide-GDP = adenosylcob(III)alamin + GMP + H(+). It carries out the reaction alpha-ribazole 5'-phosphate + adenosylcob(III)inamide-GDP = adenosylcob(III)alamin 5'-phosphate + GMP + H(+). Its pathway is cofactor biosynthesis; adenosylcobalamin biosynthesis; adenosylcobalamin from cob(II)yrinate a,c-diamide: step 7/7. Functionally, joins adenosylcobinamide-GDP and alpha-ribazole to generate adenosylcobalamin (Ado-cobalamin). Also synthesizes adenosylcobalamin 5'-phosphate from adenosylcobinamide-GDP and alpha-ribazole 5'-phosphate. In Geobacillus thermodenitrificans (strain NG80-2), this protein is Adenosylcobinamide-GDP ribazoletransferase.